A 158-amino-acid chain; its full sequence is UPF0262 protein R00612 (158 aa).

It belongs to the UPF0262 family.

The polypeptide is UPF0262 protein R00612 (Rhizobium meliloti (strain 1021) (Ensifer meliloti)).